A 153-amino-acid chain; its full sequence is Endoribonuclease YbeY (153 aa).

His-114, His-118, and His-124 together coordinate Zn(2+).

Belongs to the endoribonuclease YbeY family. Zn(2+) is required as a cofactor.

It localises to the cytoplasm. Functionally, single strand-specific metallo-endoribonuclease involved in late-stage 70S ribosome quality control and in maturation of the 3' terminus of the 16S rRNA. The chain is Endoribonuclease YbeY from Shewanella baltica (strain OS185).